The following is a 143-amino-acid chain: Large ribosomal subunit protein uL15 (143 aa).

Residues 1–52 (MKLNTLAPAAGSKSAPKRLGRGIGSGLGKTSGKGHKGQKARSGGYHKVGFEG) are disordered. Positions 21–31 (RGIGSGLGKTS) are enriched in gly residues.

It belongs to the universal ribosomal protein uL15 family. In terms of assembly, part of the 50S ribosomal subunit.

Binds to the 23S rRNA. This is Large ribosomal subunit protein uL15 from Francisella tularensis subsp. mediasiatica (strain FSC147).